A 336-amino-acid chain; its full sequence is DNA-directed RNA polymerase subunit alpha (336 aa).

The interval 1 to 232 (MIQKNWQELI…DQLGLFVNFE (232 aa)) is alpha N-terminal domain (alpha-NTD). The interval 248–336 (FNPALLKKVD…ELAKRYEDQY (89 aa)) is alpha C-terminal domain (alpha-CTD).

The protein belongs to the RNA polymerase alpha chain family. Homodimer. The RNAP catalytic core consists of 2 alpha, 1 beta, 1 beta' and 1 omega subunit. When a sigma factor is associated with the core the holoenzyme is formed, which can initiate transcription.

The catalysed reaction is RNA(n) + a ribonucleoside 5'-triphosphate = RNA(n+1) + diphosphate. Functionally, DNA-dependent RNA polymerase catalyzes the transcription of DNA into RNA using the four ribonucleoside triphosphates as substrates. The sequence is that of DNA-directed RNA polymerase subunit alpha from Chelativorans sp. (strain BNC1).